A 146-amino-acid chain; its full sequence is Protein PBDC1 homolog (146 aa).

The protein belongs to the PBDC1 family.

It localises to the cytoplasm. The sequence is that of Protein PBDC1 homolog from Saccharomyces cerevisiae (strain ATCC 204508 / S288c) (Baker's yeast).